The following is a 65-amino-acid chain: Beta-defensin 106A (65 aa).

Positions 1–20 (MRTFLFLFAVLFFLTPAKNA) are cleaved as a signal peptide. 3 disulfides stabilise this stretch: cysteine 26–cysteine 53, cysteine 33–cysteine 47, and cysteine 37–cysteine 54.

Belongs to the beta-defensin family. Monomer. Interacts with CCR2 (via extracellular N-terminal region); this interaction may preferentially require specific tyrosine sulfation on CCR2.

Its subcellular location is the secreted. The protein resides in the membrane. In terms of biological role, has antibacterial activity. Acts as a ligand for C-C chemokine receptor CCR2. The sequence is that of Beta-defensin 106A (DEFB106A) from Gorilla gorilla gorilla (Western lowland gorilla).